The sequence spans 551 residues: RanBD1 domain-containing protein C584.03c (551 aa).

In terms of domain architecture, RanBD1 spans 1 to 309 (MDELLNVASH…LLLKYADDET (309 aa)). Residue serine 441 is modified to Phosphoserine. Residues 522–551 (SVIPHSEPESSSKVINCQAKLNVEKEKKNP) form a disordered region.

It localises to the nucleus. This is RanBD1 domain-containing protein C584.03c from Schizosaccharomyces pombe (strain 972 / ATCC 24843) (Fission yeast).